The sequence spans 285 residues: Eukaryotic translation initiation factor 3 subunit F-2 (285 aa).

Positions 11 to 145 constitute an MPN domain; the sequence is VVLQPLVLFQ…TRLYCGVEMG (135 aa).

The protein belongs to the eIF-3 subunit F family. As to quaternary structure, component of the eukaryotic translation initiation factor 3 (eIF-3) complex. The eIF-3 complex interacts with pix.

It localises to the cytoplasm. In terms of biological role, component of the eukaryotic translation initiation factor 3 (eIF-3) complex, which is involved in protein synthesis of a specialized repertoire of mRNAs and, together with other initiation factors, stimulates binding of mRNA and methionyl-tRNAi to the 40S ribosome. The eIF-3 complex specifically targets and initiates translation of a subset of mRNAs involved in cell proliferation. The sequence is that of Eukaryotic translation initiation factor 3 subunit F-2 from Drosophila ananassae (Fruit fly).